Consider the following 353-residue polypeptide: N-formyl peptide receptor 3 (353 aa).

The Extracellular segment spans residues 1 to 27 (METNFSIPLNETEEVLPEPAGHTVLWI). N-linked (GlcNAc...) asparagine glycans are attached at residues asparagine 4 and asparagine 10. A helical transmembrane segment spans residues 28-50 (FSLLVHGVTFVFGVLGNGLVIWV). Residues 51 to 61 (AGFRMTRTVNT) are Cytoplasmic-facing. The chain crosses the membrane as a helical span at residues 62–83 (ICYLNLALADFSFSAILPFRMV). The Extracellular portion of the chain corresponds to 84–100 (SVAMREKWPFGSFLCKL). Cysteines 98 and 176 form a disulfide. The helical transmembrane segment at 101 to 121 (VHVMIDINLFVSVYLITIIAL) threads the bilayer. At 122 to 140 (DRCICVLHPAWAQNHRTMS) the chain is on the cytoplasmic side. A helical transmembrane segment spans residues 141–162 (LAKRVMTGLWIFTIVLTLPNFI). The Extracellular portion of the chain corresponds to 163-205 (FWTTISTTNGDTYCIFNFAFWGDTAVERLNVFITMAKVFLILH). A helical membrane pass occupies residues 206–226 (FIIGFSVPMSIITVCYGIIAA). At 227-242 (KIHRNHMIKSSRPLRV) the chain is on the cytoplasmic side. A helical membrane pass occupies residues 243–266 (FAAVVASFFICWFPYELIGILMAV). Residues 267-286 (WLKEMLLNGKYKIILVLINP) are Extracellular-facing. The chain crosses the membrane as a helical span at residues 287-306 (TSSLAFFNSCLNPILYVFMG). Residues 307-353 (RNFQERLIRSLPTSLERALTEVPDSAQTSNTDTTSASPPEETELQAM) lie on the Cytoplasmic side of the membrane. The disordered stretch occupies residues 327 to 353 (EVPDSAQTSNTDTTSASPPEETELQAM). Polar residues predominate over residues 331–343 (SAQTSNTDTTSAS).

It belongs to the G-protein coupled receptor 1 family. Detected in various tissues with highest expression in lung.

It localises to the cell membrane. In terms of biological role, low affinity receptor for N-formyl-methionyl peptides, which are powerful neutrophils chemotactic factors. Binding of FMLP to the receptor causes activation of neutrophils. This response is mediated via a G-protein that activates a phosphatidylinositol-calcium second messenger system. Acts as a receptor for humanin. This is N-formyl peptide receptor 3 (FPR3) from Homo sapiens (Human).